The sequence spans 515 residues: Cytoplasmic dynein 1 light intermediate chain 1 (515 aa).

Low complexity predominate over residues 1–24 (MAAVGRAGSFGSSSASGAANNASA). The interval 1–34 (MAAVGRAGSFGSSSASGAANNASAELRAGGEEDD) is disordered. 64–71 (GEDGAGKT) is an ATP binding site. Disordered stretches follow at residues 370 to 424 (QSQL…DPNM) and 445 to 515 (KTGS…GEAS). Residues 397 to 409 (RTPNRSVTSNVAS) are compositionally biased toward polar residues. The span at 448 to 468 (SPGGPGGVGGSPGGGSAGGTG) shows a compositional bias: gly residues. Positions 490–499 (ELDRISRKPE) are enriched in basic and acidic residues. The span at 502-515 (SPTSPTSPTEGEAS) shows a compositional bias: polar residues.

Belongs to the dynein light intermediate chain family. In terms of assembly, homodimer. The cytoplasmic dynein 1 complex consists of two catalytic heavy chains (HCs) and a number of non-catalytic subunits presented by intermediate chains (ICs). Phosphorylated.

The protein resides in the cytoplasm. Its subcellular location is the cytoskeleton. It localises to the chromosome. It is found in the centromere. The protein localises to the kinetochore. The protein resides in the spindle pole. Its subcellular location is the recycling endosome membrane. Functionally, acts as one of several non-catalytic accessory components of the cytoplasmic dynein 1 complex that are thought to be involved in linking dynein to cargos and to adapter proteins that regulate dynein function. Cytoplasmic dynein 1 acts as a motor for the intracellular retrograde motility of vesicles and organelles along microtubules. May play a role in binding dynein to membranous organelles or chromosomes. May regulate the movement of peripheral sorting endosomes along microtubule tracks toward the microtubule organizing center/centrosome, generating the endosomal recycling compartment. In Gallus gallus (Chicken), this protein is Cytoplasmic dynein 1 light intermediate chain 1 (DYNC1LI1).